The following is a 275-amino-acid chain: Glutamate racemase (275 aa).

Residues 12 to 13 (DS) and 44 to 45 (YG) each bind substrate. Cys-75 acts as the Proton donor/acceptor in catalysis. Residue 76–77 (NT) coordinates substrate. Cys-185 (proton donor/acceptor) is an active-site residue. Residue 186-187 (TH) participates in substrate binding.

This sequence belongs to the aspartate/glutamate racemases family.

The catalysed reaction is L-glutamate = D-glutamate. It participates in cell wall biogenesis; peptidoglycan biosynthesis. In terms of biological role, provides the (R)-glutamate required for cell wall biosynthesis. In Mycolicibacterium paratuberculosis (strain ATCC BAA-968 / K-10) (Mycobacterium paratuberculosis), this protein is Glutamate racemase.